The chain runs to 257 residues: Acetyl-coenzyme A carboxylase carboxyl transferase subunit beta 1 (257 aa).

The CoA carboxyltransferase N-terminal domain occupies 1 to 257; sequence MNINDIFLKR…KMHVNTGGEA (257 aa).

Belongs to the AccD/PCCB family. Acetyl-CoA carboxylase is a heterohexamer composed of biotin carboxyl carrier protein (AccB), biotin carboxylase (AccC) and two subunits each of ACCase subunit alpha (AccA) and ACCase subunit beta (AccD).

It localises to the cytoplasm. The catalysed reaction is N(6)-carboxybiotinyl-L-lysyl-[protein] + acetyl-CoA = N(6)-biotinyl-L-lysyl-[protein] + malonyl-CoA. It participates in lipid metabolism; malonyl-CoA biosynthesis; malonyl-CoA from acetyl-CoA: step 1/1. Functionally, component of the acetyl coenzyme A carboxylase (ACC) complex. Biotin carboxylase (BC) catalyzes the carboxylation of biotin on its carrier protein (BCCP) and then the CO(2) group is transferred by the transcarboxylase to acetyl-CoA to form malonyl-CoA. This Lachnospira eligens (strain ATCC 27750 / DSM 3376 / VPI C15-48 / C15-B4) (Eubacterium eligens) protein is Acetyl-coenzyme A carboxylase carboxyl transferase subunit beta 1.